Here is a 281-residue protein sequence, read N- to C-terminus: Nucleotide-binding protein Daro_0070 (281 aa).

Gly8 to Ser15 is an ATP binding site. Asp57–Ser60 serves as a coordination point for GTP.

The protein belongs to the RapZ-like family.

Its function is as follows. Displays ATPase and GTPase activities. This is Nucleotide-binding protein Daro_0070 from Dechloromonas aromatica (strain RCB).